Reading from the N-terminus, the 262-residue chain is Hemin import ATP-binding protein HmuV (262 aa).

In terms of domain architecture, ABC transporter spans 3 to 244; the sequence is LQARNLTLAR…DHMRRVYGIE (242 aa). An ATP-binding site is contributed by 35-42; that stretch reads GANGAGKS.

This sequence belongs to the ABC transporter superfamily. Heme (hemin) importer (TC 3.A.1.14.5) family. As to quaternary structure, the complex is composed of two ATP-binding proteins (HmuV), two transmembrane proteins (HmuU) and a solute-binding protein (HmuT).

It localises to the cell inner membrane. In terms of biological role, part of the ABC transporter complex HmuTUV involved in hemin import. Responsible for energy coupling to the transport system. The protein is Hemin import ATP-binding protein HmuV of Bordetella pertussis (strain Tohama I / ATCC BAA-589 / NCTC 13251).